The chain runs to 538 residues: Eukaryotic translation initiation factor 3 subunit L (538 aa).

In terms of domain architecture, PCI spans 305-513 (TFSDILLYIQ…IHIADTKVSH (209 aa)).

Belongs to the eIF-3 subunit L family. As to quaternary structure, component of the eukaryotic translation initiation factor 3 (eIF-3) complex. The eIF-3 complex interacts with pix.

The protein localises to the cytoplasm. Component of the eukaryotic translation initiation factor 3 (eIF-3) complex, which is involved in protein synthesis of a specialized repertoire of mRNAs and, together with other initiation factors, stimulates binding of mRNA and methionyl-tRNAi to the 40S ribosome. The eIF-3 complex specifically targets and initiates translation of a subset of mRNAs involved in cell proliferation. The chain is Eukaryotic translation initiation factor 3 subunit L from Drosophila virilis (Fruit fly).